A 481-amino-acid polypeptide reads, in one-letter code: Tryptophan biosynthesis protein TrpCF (481 aa).

The interval Met-1–Glu-283 is indole-3-glycerol phosphate synthase. The tract at residues Asn-284–Tyr-481 is N-(5'-phosphoribosyl)anthranilate isomerase.

It in the N-terminal section; belongs to the TrpC family. The protein in the C-terminal section; belongs to the TrpF family. Monomer.

It carries out the reaction N-(5-phospho-beta-D-ribosyl)anthranilate = 1-(2-carboxyphenylamino)-1-deoxy-D-ribulose 5-phosphate. The catalysed reaction is 1-(2-carboxyphenylamino)-1-deoxy-D-ribulose 5-phosphate + H(+) = (1S,2R)-1-C-(indol-3-yl)glycerol 3-phosphate + CO2 + H2O. The protein operates within amino-acid biosynthesis; L-tryptophan biosynthesis; L-tryptophan from chorismate: step 3/5. It participates in amino-acid biosynthesis; L-tryptophan biosynthesis; L-tryptophan from chorismate: step 4/5. Its function is as follows. Bifunctional enzyme that catalyzes two sequential steps of tryptophan biosynthetic pathway. The first reaction is catalyzed by the isomerase, coded by the TrpF domain; the second reaction is catalyzed by the synthase, coded by the TrpC domain. In Vibrio parahaemolyticus serotype O3:K6 (strain RIMD 2210633), this protein is Tryptophan biosynthesis protein TrpCF (trpC).